The following is a 246-amino-acid chain: Alpha-amylase inhibitor 1 (246 aa).

Residues 1-23 form the signal peptide; it reads MIMASSKLLSLALFLALLSHANS. N-linked (GlcNAc...) asparagine glycosylation is found at asparagine 35, asparagine 88, and asparagine 163. The propeptide occupies 240-246; the sequence is IVLNKIL.

This sequence belongs to the leguminous lectin family. In terms of assembly, heterodimer of chain 1 and chain 2. Proteolytic processing yields active form.

Functionally, lectin and alpha-amylase inhibitor. Acts as a defensive protein against insects. This is Alpha-amylase inhibitor 1 (LLP) from Phaseolus vulgaris (Kidney bean).